The primary structure comprises 442 residues: Glutamate-1-semialdehyde 2,1-aminomutase (442 aa).

Lys282 is modified (N6-(pyridoxal phosphate)lysine).

This sequence belongs to the class-III pyridoxal-phosphate-dependent aminotransferase family. HemL subfamily. Homodimer. Requires pyridoxal 5'-phosphate as cofactor.

The protein localises to the cytoplasm. The enzyme catalyses (S)-4-amino-5-oxopentanoate = 5-aminolevulinate. Its pathway is porphyrin-containing compound metabolism; protoporphyrin-IX biosynthesis; 5-aminolevulinate from L-glutamyl-tRNA(Glu): step 2/2. This chain is Glutamate-1-semialdehyde 2,1-aminomutase, found in Polaromonas naphthalenivorans (strain CJ2).